The chain runs to 224 residues: ATP-dependent dethiobiotin synthetase BioD (224 aa).

Residue 13–18 (NVGKTI) participates in ATP binding. Thr-17 is a binding site for Mg(2+). Residue Lys-38 is part of the active site. Ser-42 contacts substrate. Residues Asp-55, 116–119 (EGAG), 176–177 (NN), and Asn-211 each bind ATP. Mg(2+)-binding residues include Asp-55 and Glu-116.

Belongs to the dethiobiotin synthetase family. In terms of assembly, homodimer. Mg(2+) serves as cofactor.

It is found in the cytoplasm. It catalyses the reaction (7R,8S)-7,8-diammoniononanoate + CO2 + ATP = (4R,5S)-dethiobiotin + ADP + phosphate + 3 H(+). Its pathway is cofactor biosynthesis; biotin biosynthesis; biotin from 7,8-diaminononanoate: step 1/2. Its function is as follows. Catalyzes a mechanistically unusual reaction, the ATP-dependent insertion of CO2 between the N7 and N8 nitrogen atoms of 7,8-diaminopelargonic acid (DAPA, also called 7,8-diammoniononanoate) to form a ureido ring. The sequence is that of ATP-dependent dethiobiotin synthetase BioD from Buchnera aphidicola subsp. Acyrthosiphon pisum (strain 5A).